The chain runs to 439 residues: ATP-dependent protease ATPase subunit HslU (439 aa).

Residues I17, 59–64, D251, E317, and R389 contribute to the ATP site; that span reads GVGKTE.

It belongs to the ClpX chaperone family. HslU subfamily. A double ring-shaped homohexamer of HslV is capped on each side by a ring-shaped HslU homohexamer. The assembly of the HslU/HslV complex is dependent on binding of ATP.

It localises to the cytoplasm. ATPase subunit of a proteasome-like degradation complex; this subunit has chaperone activity. The binding of ATP and its subsequent hydrolysis by HslU are essential for unfolding of protein substrates subsequently hydrolyzed by HslV. HslU recognizes the N-terminal part of its protein substrates and unfolds these before they are guided to HslV for hydrolysis. The chain is ATP-dependent protease ATPase subunit HslU from Campylobacter jejuni subsp. doylei (strain ATCC BAA-1458 / RM4099 / 269.97).